The chain runs to 347 residues: D-alanine--D-alanine ligase (347 aa).

One can recognise an ATP-grasp domain in the interval 133–342 (KQAFAQASLP…FPDLVHRLIQ (210 aa)). 169 to 224 (ETELGYPCFVKPANLGSSVGIAKVRDRAELEAALDQAAALDRRLIIEAAIDNPREV) serves as a coordination point for ATP. Mg(2+)-binding residues include Asp-296, Glu-309, and Asn-311.

Belongs to the D-alanine--D-alanine ligase family. Mg(2+) serves as cofactor. Requires Mn(2+) as cofactor.

Its subcellular location is the cytoplasm. It carries out the reaction 2 D-alanine + ATP = D-alanyl-D-alanine + ADP + phosphate + H(+). The protein operates within cell wall biogenesis; peptidoglycan biosynthesis. Functionally, cell wall formation. The polypeptide is D-alanine--D-alanine ligase (Synechococcus elongatus (strain ATCC 33912 / PCC 7942 / FACHB-805) (Anacystis nidulans R2)).